The chain runs to 614 residues: High-affinity choline transporter 1 (614 aa).

Residues 6–26 form a helical membrane-spanning segment; it reads GVVSIVLFYLLILVVGIWAGR. Over 27–44 the chain is Cytoplasmic; it reads KKQSGNDSEEEVMLAGRS. A helical transmembrane segment spans residues 45–65; it reads IGLFVGIFTMTATWVGGGYIN. Topologically, residues 66-75 are extracellular; the sequence is GTAEAIYTSG. Residues 76–96 traverse the membrane as a helical segment; that stretch reads LVWCQAPFGYALSLVFGGIFF. At 97-119 the chain is on the cytoplasmic side; it reads ANPMRKQGYITMLDPLQDSFGER. Residues 120–140 form a helical membrane-spanning segment; that stretch reads MGGLLFLPALCGEVFWAAGIL. Residues 141–158 are Extracellular-facing; the sequence is AALGATLSVIIDMDHRTS. Residues 159–179 form a helical membrane-spanning segment; that stretch reads VILSSCIAIFYTLFGGLYSVA. Residues 180–185 lie on the Cytoplasmic side of the membrane; it reads YTDVIQ. A helical transmembrane segment spans residues 186-206; sequence LFCIFIGLWMCIPFAWSNEHV. Topologically, residues 207 to 225 are extracellular; that stretch reads GSLSDLEVDWIGHVEPKKH. The helical transmembrane segment at 226–246 threads the bilayer; sequence WLYIDYGLLLVFGGIPWQVYF. At 247-262 the chain is on the cytoplasmic side; sequence QRVLSSKTAGRAQLLS. The helical transmembrane segment at 263–283 threads the bilayer; the sequence is YVAAAGCILMAIPPVLIGAIA. Residues 284–305 are Extracellular-facing; sequence KATPWNETDYKGPYPLTVDETS. Asn-289 carries N-linked (GlcNAc...) asparagine glycosylation. The helical transmembrane segment at 306 to 326 threads the bilayer; it reads MILPMVLQYLTPDFVSFFGLG. At 327 to 364 the chain is on the cytoplasmic side; sequence AVSAAVMSSADSSVLSAASMFARNVYKLIFRQKASEME. The helical transmembrane segment at 365–385 threads the bilayer; it reads IIWVMRVAIIVVGILATIMAL. At 386 to 394 the chain is on the extracellular side; sequence TIPSIYGLW. Residues 395–415 form a helical membrane-spanning segment; that stretch reads SMCSDLVYVILFPQLLMVVHF. The Cytoplasmic segment spans residues 416-424; sequence KKHCNTYGS. Residues 425 to 445 form a helical membrane-spanning segment; sequence LSAYIVALAIRLSGGEAILGL. The Extracellular portion of the chain corresponds to 446–467; it reads APLIKYPGYDEETKEQMFPFRT. A helical transmembrane segment spans residues 468 to 488; sequence MAMLLSLVTLISVSWWTKMMF. Residues 489–614 lie on the Cytoplasmic side of the membrane; that stretch reads ESGKLPPSYD…PTAEQDNTAF (126 aa). Residues 583-614 are disordered; sequence ATGVKPSGGGGGHLQSQSGMAMPTAEQDNTAF.

Belongs to the sodium:solute symporter (SSF) (TC 2.A.21) family.

It is found in the membrane. In terms of biological role, imports choline from the extracellular space to the neuron with high affinity. Rate-limiting step in acetylcholine synthesis. Sodium ion and chloride ion dependent. In Drosophila melanogaster (Fruit fly), this protein is High-affinity choline transporter 1.